Reading from the N-terminus, the 407-residue chain is MIHQPPAGARDLLPLEVVQKAWINDRLQQVFGGWGYQRIVTSTIEWLETLMAGGAIQHSTVIQLQDNSAGQLGLRPELTASIARAAVTRMADTTYPQRLCYRANVFRNPPSGHHGKQLEFYQAGVELLFAGGILADAEILLLVADCLEQLGIPQWQLLIGEAGVTRSLLSPFPDPLKSQVCHCLAQLDYVTLENLDYPSSHLKERAQLLFDLRGNATEVLEKVAKLELDKAGEESINNLKSLMRLINDSRSKPLPLTLDLSVIQTFDYYTGIVFKAVGKTDNQLHILGQGGRYDQLLGVYHPKGQSAPGIGFSFNVEDLYACLLNTSILPQLAPSIDWLIIPQTDEARSTAFQYAQNLRDSGKNLRVAIDLGGRSEAEIREYVQQNRVQQLAWIPEKGEPIIEVIFS.

Belongs to the class-II aminoacyl-tRNA synthetase family. HisZ subfamily. Heteromultimer composed of HisG and HisZ subunits.

It is found in the cytoplasm. Its pathway is amino-acid biosynthesis; L-histidine biosynthesis; L-histidine from 5-phospho-alpha-D-ribose 1-diphosphate: step 1/9. Its function is as follows. Required for the first step of histidine biosynthesis. May allow the feedback regulation of ATP phosphoribosyltransferase activity by histidine. This is ATP phosphoribosyltransferase regulatory subunit from Rippkaea orientalis (strain PCC 8801 / RF-1) (Cyanothece sp. (strain PCC 8801)).